Consider the following 223-residue polypeptide: Ribosomal RNA small subunit methyltransferase G (223 aa).

Residues Gly82, Leu87, 133–134 (AE), and Arg151 contribute to the S-adenosyl-L-methionine site.

It belongs to the methyltransferase superfamily. RNA methyltransferase RsmG family.

It is found in the cytoplasm. Its function is as follows. Specifically methylates the N7 position of guanine in position 518 of 16S rRNA. The protein is Ribosomal RNA small subunit methyltransferase G of Corynebacterium glutamicum (strain R).